The sequence spans 177 residues: uncharacterized protein (177 aa).

This is an uncharacterized protein from Grapevine virus A (isolate Is 151) (GVA).